The primary structure comprises 352 residues: Peptide chain release factor 1 (352 aa).

N5-methylglutamine is present on Gln230.

It belongs to the prokaryotic/mitochondrial release factor family. Post-translationally, methylated by PrmC. Methylation increases the termination efficiency of RF1.

The protein resides in the cytoplasm. In terms of biological role, peptide chain release factor 1 directs the termination of translation in response to the peptide chain termination codons UAG and UAA. The polypeptide is Peptide chain release factor 1 (Exiguobacterium sibiricum (strain DSM 17290 / CCUG 55495 / CIP 109462 / JCM 13490 / 255-15)).